Reading from the N-terminus, the 167-residue chain is 18.8 kDa class II heat shock protein (167 aa).

One can recognise a sHSP domain in the interval Asp-49–Ala-167.

It belongs to the small heat shock protein (HSP20) family.

It localises to the cytoplasm. The sequence is that of 18.8 kDa class II heat shock protein (SHSP-2) from Ipomoea nil (Japanese morning glory).